Here is a 171-residue protein sequence, read N- to C-terminus: UPF0312 protein SE_0264 (171 aa).

This sequence belongs to the UPF0312 family.

The polypeptide is UPF0312 protein SE_0264 (Staphylococcus epidermidis (strain ATCC 12228 / FDA PCI 1200)).